A 673-amino-acid chain; its full sequence is Protein VirD3 (673 aa).

6 disordered regions span residues 36-73 (VAGEDGRDTSVPTALSRPPIEDMPHGVQETSASGGRLG), 171-216 (SPVN…GTSV), 229-409 (ERDT…LRSS), 478-497 (RLNGERSRSPKTSQASLEDF), 520-552 (EKGKQKISTEADTRFDLGNSSAPRVSPRSVTPL), and 585-673 (DSSR…GCGR). Composition is skewed to polar residues over residues 171–183 (SPVNRAAHSSNWQ), 193–216 (VQPSADRAQNSAQESSTFPDGTSV), 234–246 (SETTRNSGNTISS), and 268–277 (QSLSVTVTTP). A compositionally biased stretch (low complexity) spans 278–287 (NSNAEASSHS). Residues 288–303 (AHTETLDDVSSDRSSE) are compositionally biased toward basic and acidic residues. Basic and acidic residues-rich tracts occupy residues 520–534 (EKGKQKISTEADTRF) and 638–673 (AAEHSAIDDIWKRDDRDRRTHPYRGLDSRSREGCGR).

This chain is Protein VirD3 (virD3), found in Agrobacterium fabrum (strain C58 / ATCC 33970) (Agrobacterium tumefaciens (strain C58)).